A 176-amino-acid polypeptide reads, in one-letter code: Pituitary adenylate cyclase-activating polypeptide (176 aa).

Residues 1-24 (MTMCSGARLALLVYGIIMHSSVYC) form the signal peptide. Residues 25-80 (SPAAAGLRFPGIRPEDEAYDEDGNPLQDFYDSDPPGVGGPASTLRDAYALYYPAEE) constitute a propeptide that is removed on maturation. Residues 150–158 (VKKYLAAVL) form an important for receptor binding region. Leucine 158 carries the leucine amide modification. A Lysine amide modification is found at lysine 169. Residues 173-176 (IAYL) constitute a propeptide that is removed on maturation.

This sequence belongs to the glucagon family.

Its subcellular location is the secreted. In terms of biological role, PACAP is a neuropeptide involved in diverse array of physiological processes through activating the PACAP subfamily of class B1 G protein-coupled receptors: VIP receptor 1 (VIPR1), VIP receptor 2 (VIPR2), and PACAP type I receptor (ADCYAP1R1). Exerts neuroprotective and general cytoprotective effects due to anti-apoptotic, anti-inflammatory, and antioxidant actions. Promotes neuron projection development through the RAPGEF2/Rap1/B-Raf/ERK pathway. In chromaffin cells, induces long-lasting increase of intracellular calcium concentrations and neuroendocrine secretion. Involved in the control of glucose homeostasis, induces insulin secretion by pancreatic beta cells. PACAP exists in two bioactive forms from proteolysis of the same precursor protein, PACAP27 and PACAP38, which differ by eleven amino acid residues in the C-terminus. This Sus scrofa (Pig) protein is Pituitary adenylate cyclase-activating polypeptide (ADCYAP1).